The primary structure comprises 815 residues: Cell division control protein 53 (815 aa).

The interval 9–280 (DDLEATWNFI…WDDHTKKPLS (272 aa)) is required for interaction with SKP1/CBF3D and F-box protein. A required for interaction with CDC34/UBC3 region spans residues 448–748 (KKATKPEVAS…IEKELNTERQ (301 aa)). Residues 746-807 (ERQIFLEACI…QKGYLQRGDD (62 aa)) enclose the Cullin neddylation domain. Residue lysine 760 forms a Glycyl lysine isopeptide (Lys-Gly) (interchain with G-Cter in NEDD8) linkage.

This sequence belongs to the cullin family. In terms of assembly, component of multiple SCF (SKP1-CUL1-F-box) E3 ubiquitin-protein ligase complexes formed of CUL1, SKP1/HRT1, RBX1 and a variable F-box domain-containing protein as substrate-specific adapter. Component of the SCF(CDC4) complex containing CDC4. Component of the SCF(MET30) complex containing MET30. Component of the SCF(GRR1) complex containing GRR1. Component of the probable SCF(DIA2) complex containing DIA2. Component of the probable SCF(YDR131C) complex containing YDR131C. Component of the probable SCF(YDR306C) complex containing YDR306C. Component of the probable SCF(YLR224W) complex containing YLR224W. Component of the probable SCF(YJL149W) complex containing YJL149W. Component of the probable SCF(YNL311C) complex containing YNL311C. Component of the probable SCF(MDM30) complex containing MDM30. Component of the probable SCF(UFO1) complex containing UFO1. Component of the probable SCF(HRT3) complex containing HRT3. Component of the probable SCF(YBR280C) complex containing YBR280C. Component of the probable SCF(YBR352W) complex containing YBR352W. Interacts with DCN1, YBR280C, YLR224W and YLR352W. The unneddylated form interacts with LAG2/CAND1 and the interaction mediates the exchange of the F-box substrate-specific subunit. Post-translationally, neddylated; enhancing the ubiquitin-ligase activity.

It is found in the cytoplasm. The protein resides in the nucleus. Its function is as follows. Core component of multiple cullin-RING-based SCF (SKP1-CUL1-F-box) E3 ubiquitin-protein ligase complexes which mediate the ubiquitination and subsequent proteasomal degradation of target proteins. As a scaffold protein may contribute to catalysis through positioning of the substrate and the ubiquitin-conjugating enzyme. The SCF complex associates with CDC34 as the E2 ubiquitin-conjugating enzyme. The functional specificity of the SCF complex depends on the type of F-box protein. SCF(CDC4) controls the G1-to-S phase transition; it directs ubiquitination of the phosphorylated CDK inhibitor SIC1 and of CDC6. SCF(CDC4) directs ubiquitination of GCN4. SCF(GRR1) directs ubiquitination of phosphorylated CLN1, CLN2 and GIC2. SCF(MET30) directs ubiquitination of MET4. SCF(DIA2) is specifically involved in the pheromone induced degradation of phosphorylated TEC1. SCF(MDM30) seems to direct ubiquitination of FZ01. Involved in the regulation of methionine biosynthesis genes. The polypeptide is Cell division control protein 53 (CDC53) (Saccharomyces cerevisiae (strain ATCC 204508 / S288c) (Baker's yeast)).